We begin with the raw amino-acid sequence, 244 residues long: DNA polymerase sliding clamp (244 aa).

This sequence belongs to the PCNA family. As to quaternary structure, homotrimer. The subunits circularize to form a toroid; DNA passes through its center. Replication factor C (RFC) is required to load the toroid on the DNA.

Functionally, sliding clamp subunit that acts as a moving platform for DNA processing. Responsible for tethering the catalytic subunit of DNA polymerase and other proteins to DNA during high-speed replication. This Methanothrix thermoacetophila (strain DSM 6194 / JCM 14653 / NBRC 101360 / PT) (Methanosaeta thermophila) protein is DNA polymerase sliding clamp.